A 140-amino-acid chain; its full sequence is Small ribosomal subunit protein uS12 (140 aa).

A 3-methylthioaspartic acid modification is found at Asp-102.

This sequence belongs to the universal ribosomal protein uS12 family. As to quaternary structure, part of the 30S ribosomal subunit. Contacts proteins S8 and S17. May interact with IF1 in the 30S initiation complex.

Its function is as follows. With S4 and S5 plays an important role in translational accuracy. Functionally, interacts with and stabilizes bases of the 16S rRNA that are involved in tRNA selection in the A site and with the mRNA backbone. Located at the interface of the 30S and 50S subunits, it traverses the body of the 30S subunit contacting proteins on the other side and probably holding the rRNA structure together. The combined cluster of proteins S8, S12 and S17 appears to hold together the shoulder and platform of the 30S subunit. The chain is Small ribosomal subunit protein uS12 from Bacillus cytotoxicus (strain DSM 22905 / CIP 110041 / 391-98 / NVH 391-98).